Reading from the N-terminus, the 171-residue chain is Putative defense protein (171 aa).

The first 23 residues, 1-23 (MKVYACLCAAVVMLVMTSRVSEA), serve as a signal peptide directing secretion. Residues 24–171 (RSTGAPLSAC…VQSAPIKIVS (148 aa)) form the Reelin domain. Cys-33 and Cys-110 are joined by a disulfide. A glycan (N-linked (GlcNAc...) asparagine) is linked at Asn-41.

Belongs to the insect defense protein family.

The protein resides in the secreted. May have antimicrobial activity. This Bombyx mori (Silk moth) protein is Putative defense protein.